Reading from the N-terminus, the 449-residue chain is MTIPELPILWRDNAPPSEYEAWRSRTFNSKRPDAQPLAIIKPTTIDHIVSATALAKENNAKLALRSGGHSLQCWSLRKDSILVDLENFRYLEFDDATGVVSVTPSVTSSELLLFLANKKRFFPSGHSGEVGLGGFLLQGGIGLNARSYGYACEYLTAVDVVTVSGEVKHCSPDENADLFWAARGAGPEFPAIVTRFHLNTRPLLPTVKRCTYIWPAVCYEMVFKWVLEILPTLSDDIEPTIFGFTLPNTPIPVIAFHAHVHAESDESAIELLKPLHESHPAGAMVEQDCVDTSVQQEFESGHAIMPPGARYFTDSVFLTPGTDIIEACREMFTTLPAQAAGSIAYWEPMKQRTKLPEMAWSIHSEHYVSLMAIYGDQNQDHKQQTWILDCFKDMDRKGLLLGTYVGDAHPKDRPHHYWSDPAKERIQKIGVQWDPEARLRGTIFAENTL.

An FAD-binding PCMH-type domain is found at 32–203 (PDAQPLAIIK…TRFHLNTRPL (172 aa)).

The protein belongs to the oxygen-dependent FAD-linked oxidoreductase family. The cofactor is FAD.

The protein operates within secondary metabolite biosynthesis. FAD-linked oxidoreductase; part of the gene cluster that mediates the biosynthesis of the indole diterpenes janthitremanes such as shearinine K or shearinine A. The geranylgeranyl diphosphate (GGPP) synthase janG catalyzes the first step in janthitremane biosynthesis via conversion of farnesyl pyrophosphate and isopentyl pyrophosphate into geranylgeranyl pyrophosphate (GGPP). Condensation of indole-3-glycerol phosphate with GGPP by the prenyl transferase janC then forms 3-geranylgeranylindole (3-GGI). Epoxidation by the FAD-dependent monooxygenase janM leads to a epoxidized-GGI that is substrate of the terpene cyclase janB for cyclization to yield paspaline. Paspaline is subsequently converted to 13-desoxypaspaline by the cytochrome P450 monooxygenase janP, via beta-PC-M6 in a series of alpha-face oxidations. The cytochrome P450 monooxygenase janQ is proposed to carry out sequential beta-face oxidation steps at C-7 and C-13 of 13-desoxypaspaline to form paspalicine and paspalinine respectively. The indole diterpene prenyltransferase janD may then convert paspalinine into shearinine K which is substrate of janO and/or additional enzymes for oxidation and cyclization to generate shearinine A. This chain is FAD-linked oxidoreductase janO, found in Penicillium janthinellum (Penicillium vitale).